Consider the following 290-residue polypeptide: 33 kDa chaperonin (290 aa).

Intrachain disulfides connect cysteine 235–cysteine 237 and cysteine 268–cysteine 271.

The protein belongs to the HSP33 family. Post-translationally, under oxidizing conditions two disulfide bonds are formed involving the reactive cysteines. Under reducing conditions zinc is bound to the reactive cysteines and the protein is inactive.

Its subcellular location is the cytoplasm. Redox regulated molecular chaperone. Protects both thermally unfolding and oxidatively damaged proteins from irreversible aggregation. Plays an important role in the bacterial defense system toward oxidative stress. This is 33 kDa chaperonin from Streptococcus pneumoniae (strain JJA).